A 469-amino-acid chain; its full sequence is Glutamate--tRNA ligase (469 aa).

A 'HIGH' region motif is present at residues 9–19 (PSPTGFLHVGG). A 'KMSKS' region motif is present at residues 236–240 (KLSKR). Lysine 239 serves as a coordination point for ATP.

This sequence belongs to the class-I aminoacyl-tRNA synthetase family. Glutamate--tRNA ligase type 1 subfamily. As to quaternary structure, monomer.

It is found in the cytoplasm. It catalyses the reaction tRNA(Glu) + L-glutamate + ATP = L-glutamyl-tRNA(Glu) + AMP + diphosphate. Its function is as follows. Catalyzes the attachment of glutamate to tRNA(Glu) in a two-step reaction: glutamate is first activated by ATP to form Glu-AMP and then transferred to the acceptor end of tRNA(Glu). The protein is Glutamate--tRNA ligase of Pseudoalteromonas atlantica (strain T6c / ATCC BAA-1087).